Consider the following 546-residue polypeptide: Chaperonin GroEL (546 aa).

Residues 30–33 (TLGP), K51, 87–91 (DGTTT), G415, 479–481 (NAA), and D495 contribute to the ATP site.

It belongs to the chaperonin (HSP60) family. Forms a cylinder of 14 subunits composed of two heptameric rings stacked back-to-back. Interacts with the co-chaperonin GroES.

It localises to the cytoplasm. The catalysed reaction is ATP + H2O + a folded polypeptide = ADP + phosphate + an unfolded polypeptide.. Its function is as follows. Together with its co-chaperonin GroES, plays an essential role in assisting protein folding. The GroEL-GroES system forms a nano-cage that allows encapsulation of the non-native substrate proteins and provides a physical environment optimized to promote and accelerate protein folding. This is Chaperonin GroEL from Stutzerimonas stutzeri (strain A1501) (Pseudomonas stutzeri).